The chain runs to 453 residues: Pre-mRNA-splicing factor prp46 (453 aa).

Over residues 62–71 (EKQAKAAAAG) the composition is skewed to low complexity. Positions 62–129 (EKQAKAAAAG…PSATRQQRPD (68 aa)) are disordered. WD repeat units lie at residues 142–181 (GHLG…LRLT), 184–223 (GHIS…VIRH), 226–265 (GHLS…NIHV), 268–309 (GHKG…GVLT), 311–350 (HKKG…QNFE), 351–389 (GHNA…KFQS), and 400–439 (DAEA…TPES). The tract at residues 432–453 (DDEATPESHPVTWAPTLGRQRY) is disordered.

Belongs to the WD repeat PRL1/PRL2 family. Associated with the spliceosome.

It localises to the cytoplasm. Its subcellular location is the nucleus. In terms of biological role, involved in pre-mRNA splicing and required for cell cycle progression at G2/M. The chain is Pre-mRNA-splicing factor prp46 (prp46) from Aspergillus fumigatus (strain ATCC MYA-4609 / CBS 101355 / FGSC A1100 / Af293) (Neosartorya fumigata).